A 385-amino-acid polypeptide reads, in one-letter code: tRNA N6-adenosine threonylcarbamoyltransferase (385 aa).

Histidine 140, histidine 144, and tyrosine 161 together coordinate a divalent metal cation. Residues 161 to 165 (YVSGG), aspartate 193, glycine 208, glutamate 212, and asparagine 314 each bind substrate. Aspartate 343 is a binding site for a divalent metal cation.

The protein belongs to the KAE1 / TsaD family. In terms of assembly, component of the EKC/KEOPS complex composed of at least BUD32, CGI121, GON7, KAE1 and PCC1; the whole complex dimerizes. It depends on a divalent metal cation as a cofactor.

It is found in the cytoplasm. It localises to the nucleus. It catalyses the reaction L-threonylcarbamoyladenylate + adenosine(37) in tRNA = N(6)-L-threonylcarbamoyladenosine(37) in tRNA + AMP + H(+). Its function is as follows. Component of the EKC/KEOPS complex that is required for the formation of a threonylcarbamoyl group on adenosine at position 37 (t(6)A37) in tRNAs that read codons beginning with adenine. The complex is probably involved in the transfer of the threonylcarbamoyl moiety of threonylcarbamoyl-AMP (TC-AMP) to the N6 group of A37. KAE1 likely plays a direct catalytic role in this reaction, but requires other protein(s) of the complex to fulfill this activity. The EKC/KEOPS complex also promotes both telomere uncapping and telomere elongation. The complex is required for efficient recruitment of transcriptional coactivators. In Eremothecium gossypii (strain ATCC 10895 / CBS 109.51 / FGSC 9923 / NRRL Y-1056) (Yeast), this protein is tRNA N6-adenosine threonylcarbamoyltransferase.